The primary structure comprises 132 residues: ATP synthase epsilon chain (132 aa).

The protein belongs to the ATPase epsilon chain family. F-type ATPases have 2 components, CF(1) - the catalytic core - and CF(0) - the membrane proton channel. CF(1) has five subunits: alpha(3), beta(3), gamma(1), delta(1), epsilon(1). CF(0) has three main subunits: a, b and c.

It is found in the cell inner membrane. Its function is as follows. Produces ATP from ADP in the presence of a proton gradient across the membrane. The sequence is that of ATP synthase epsilon chain from Cereibacter sphaeroides (strain ATCC 17025 / ATH 2.4.3) (Rhodobacter sphaeroides).